An 856-amino-acid chain; its full sequence is DNA mismatch repair protein MutS (856 aa).

607–614 (GPNMSGKS) lines the ATP pocket.

This sequence belongs to the DNA mismatch repair MutS family.

In terms of biological role, this protein is involved in the repair of mismatches in DNA. It is possible that it carries out the mismatch recognition step. This protein has a weak ATPase activity. The polypeptide is DNA mismatch repair protein MutS (Lactobacillus delbrueckii subsp. bulgaricus (strain ATCC BAA-365 / Lb-18)).